Here is a 205-residue protein sequence, read N- to C-terminus: Proteasome subunit beta type-3 (205 aa).

Ser2 is modified (N-acetylserine). Position 77 is an N6-acetyllysine (Lys77).

It belongs to the peptidase T1B family. In terms of assembly, the 26S proteasome consists of a 20S proteasome core and two 19S regulatory subunits. The 20S proteasome core is a barrel-shaped complex made of 28 subunits that are arranged in four stacked rings. The two outer rings are each formed by seven alpha subunits, and the two inner rings are formed by seven beta subunits. The proteolytic activity is exerted by three beta-subunits PSMB5, PSMB6 and PSMB7. In terms of tissue distribution, detected in liver (at protein level).

The protein localises to the cytoplasm. It localises to the nucleus. In terms of biological role, non-catalytic component of the 20S core proteasome complex involved in the proteolytic degradation of most intracellular proteins. This complex plays numerous essential roles within the cell by associating with different regulatory particles. Associated with two 19S regulatory particles, forms the 26S proteasome and thus participates in the ATP-dependent degradation of ubiquitinated proteins. The 26S proteasome plays a key role in the maintenance of protein homeostasis by removing misfolded or damaged proteins that could impair cellular functions, and by removing proteins whose functions are no longer required. Associated with the PA200 or PA28, the 20S proteasome mediates ubiquitin-independent protein degradation. This type of proteolysis is required in several pathways including spermatogenesis (20S-PA200 complex) or generation of a subset of MHC class I-presented antigenic peptides (20S-PA28 complex). This chain is Proteasome subunit beta type-3 (Psmb3), found in Mus musculus (Mouse).